An 89-amino-acid chain; its full sequence is Small ribosomal subunit protein bS16c (89 aa).

Belongs to the bacterial ribosomal protein bS16 family.

The protein resides in the plastid. It is found in the chloroplast. This chain is Small ribosomal subunit protein bS16c, found in Drimys granadensis.